We begin with the raw amino-acid sequence, 359 residues long: Outer membrane protein assembly factor BamC (359 aa).

Positions 1–34 (MASLFDKNSFQMTRLQKTAVAKVVGVSLIMLLAA) are cleaved as a signal peptide. Cys-35 carries N-palmitoyl cysteine lipidation. A lipid anchor (S-diacylglycerol cysteine) is attached at Cys-35.

This sequence belongs to the BamC family. As to quaternary structure, part of the Bam complex, which is composed of the outer membrane protein BamA, and four lipoproteins BamB, BamC, BamD and BamE.

Its subcellular location is the cell outer membrane. Functionally, part of the outer membrane protein assembly complex, which is involved in assembly and insertion of beta-barrel proteins into the outer membrane. This Rahnella sp. (strain Y9602) protein is Outer membrane protein assembly factor BamC.